We begin with the raw amino-acid sequence, 492 residues long: Probable glycine dehydrogenase (decarboxylating) subunit 2 (492 aa).

Lys-274 carries the N6-(pyridoxal phosphate)lysine modification.

It belongs to the GcvP family. C-terminal subunit subfamily. In terms of assembly, the glycine cleavage system is composed of four proteins: P, T, L and H. In this organism, the P 'protein' is a heterodimer of two subunits. Pyridoxal 5'-phosphate is required as a cofactor.

The enzyme catalyses N(6)-[(R)-lipoyl]-L-lysyl-[glycine-cleavage complex H protein] + glycine + H(+) = N(6)-[(R)-S(8)-aminomethyldihydrolipoyl]-L-lysyl-[glycine-cleavage complex H protein] + CO2. In terms of biological role, the glycine cleavage system catalyzes the degradation of glycine. The P protein binds the alpha-amino group of glycine through its pyridoxal phosphate cofactor; CO(2) is released and the remaining methylamine moiety is then transferred to the lipoamide cofactor of the H protein. This Staphylococcus saprophyticus subsp. saprophyticus (strain ATCC 15305 / DSM 20229 / NCIMB 8711 / NCTC 7292 / S-41) protein is Probable glycine dehydrogenase (decarboxylating) subunit 2.